The chain runs to 486 residues: MASIRELHQQLVKKERSAVEITQEALERIEALEPKLHSFLCVTAERALEQAGAVDAKIAAGEEIGLLAGIPVGIKDNLCTKGIPTTCASRILENFVPPYESTATQKLADAGAVMVGKTNLDEFAMGSSTENSAYQVTANPWNLSRVPGGSSGGSAAAVSSQECVVALGSDTGGSIRQPASFCGVVGMKPTYGLVSRYGLVAYASSLDQIGPFANTVEDAAILLNAIAGHDPKDSTSLKVAIPNYAASFKPDFKPRGQLRIGIVKETFGEGLDSVVEQAVTKAVDVLQSLGAEIHIISCPRFRYGLPTYYIIAPSEASANLARYDGVKYGYRAPDADNLLSMYTRTRATGFGTEVKRRIMIGTYALSAGYYDAYYLKAQKVRTLIKEDFEKAFRVVDVLVCPTSPTTAFKAGEKTTDPLSMYLTDLMTIPVNLAGLPSLSLPCGFDDQGLPIGLQLIGNVLREDQLFQVAYAYEQATTWHLRKPQIS.

Active-site charge relay system residues include lysine 75 and serine 150. Serine 174 (acyl-ester intermediate) is an active-site residue.

It belongs to the amidase family. GatA subfamily. As to quaternary structure, heterotrimer of A, B and C subunits.

The catalysed reaction is L-glutamyl-tRNA(Gln) + L-glutamine + ATP + H2O = L-glutaminyl-tRNA(Gln) + L-glutamate + ADP + phosphate + H(+). In terms of biological role, allows the formation of correctly charged Gln-tRNA(Gln) through the transamidation of misacylated Glu-tRNA(Gln) in organisms which lack glutaminyl-tRNA synthetase. The reaction takes place in the presence of glutamine and ATP through an activated gamma-phospho-Glu-tRNA(Gln). This is Glutamyl-tRNA(Gln) amidotransferase subunit A from Nostoc punctiforme (strain ATCC 29133 / PCC 73102).